Consider the following 211-residue polypeptide: Metalloproteinase inhibitor 3 (211 aa).

An N-terminal signal peptide occupies residues 1–23 (MTPWLGLVVLLGSWSLGDWGAEA). Cysteine 24 is a Zn(2+) binding site. Involved in metalloproteinase-binding regions lie at residues 24-27 (CTCS) and 88-89 (ES). Cystine bridges form between cysteine 24–cysteine 91, cysteine 26–cysteine 118, cysteine 36–cysteine 143, cysteine 145–cysteine 192, cysteine 150–cysteine 155, and cysteine 163–cysteine 184. The NTR domain maps to 24-143 (CTCSPSHPQD…GLNYRYHLGC (120 aa)). A mediates interaction with EFEMP1 region spans residues 105–188 (TGRVYDGKMY…SKHYACIRQK (84 aa)). N-linked (GlcNAc...) asparagine glycosylation is present at asparagine 207.

It belongs to the protease inhibitor I35 (TIMP) family. Interacts with EFEMP1. Interacts with KDR.

It is found in the secreted. The protein resides in the extracellular space. Its subcellular location is the extracellular matrix. Mediates a variety of processes including matrix regulation and turnover, inflammation, and angiogenesis, through reversible inhibition of zinc protease superfamily enzymes, primarily matrix metalloproteinases (MMPs). Regulates extracellular matrix (ECM) remodeling through inhibition of matrix metalloproteinases (MMP) including MMP-1, MMP-2, MMP-3, MMP-7, MMP-9, MMP-13, MMP-14 and MMP-15. Additionally, modulates the processing of amyloid precursor protein (APP) and apolipoprotein E receptor ApoER2 by inhibiting two alpha-secretases ADAM10 and ADAM17. Functions as a tumor suppressor and a potent inhibitor of angiogenesis. Exerts its anti-angiogenic effect by directly interacting with vascular endothelial growth factor (VEGF) receptor-2/KDR, preventing its binding to the VEGFA ligand. Selectively induces apoptosis in angiogenic endothelial cells through a caspase-independent cell death pathway. Mechanistically, inhibits matrix-induced focal adhesion kinase PTK2 tyrosine phosphorylation and association with paxillin/PXN and disrupts the incorporation of ITGB3, PTK2 and PXN into focal adhesion contacts on the matrix. This Bos taurus (Bovine) protein is Metalloproteinase inhibitor 3 (TIMP3).